The sequence spans 151 residues: Ribosome maturation factor RimP (151 aa).

This sequence belongs to the RimP family.

The protein resides in the cytoplasm. Its function is as follows. Required for maturation of 30S ribosomal subunits. This is Ribosome maturation factor RimP from Haemophilus influenzae (strain PittEE).